The following is a 530-amino-acid chain: Phosphoenolpyruvate carboxykinase (ATP) (530 aa).

The substrate site is built by R58, Y195, and K201. ATP-binding positions include K201, H220, and 236 to 244 (GLSGTGKTT). Mn(2+) contacts are provided by K201 and H220. D257 is a binding site for Mn(2+). Residues E285, R321, 440–441 (RI), and T446 each bind ATP. R321 serves as a coordination point for substrate.

This sequence belongs to the phosphoenolpyruvate carboxykinase (ATP) family. Requires Mn(2+) as cofactor.

It localises to the cytoplasm. It catalyses the reaction oxaloacetate + ATP = phosphoenolpyruvate + ADP + CO2. The protein operates within carbohydrate biosynthesis; gluconeogenesis. Its function is as follows. Involved in the gluconeogenesis. Catalyzes the conversion of oxaloacetate (OAA) to phosphoenolpyruvate (PEP) through direct phosphoryl transfer between the nucleoside triphosphate and OAA. The protein is Phosphoenolpyruvate carboxykinase (ATP) of Staphylococcus aureus (strain Mu3 / ATCC 700698).